Reading from the N-terminus, the 20-residue chain is NLYQFGNMIQCTIPGSNPLL.

Ca(2+) is required as a cofactor. In terms of processing, contains seven disulfide bonds. In terms of tissue distribution, expressed by the venom gland.

It localises to the secreted. The enzyme catalyses a 1,2-diacyl-sn-glycero-3-phosphocholine + H2O = a 1-acyl-sn-glycero-3-phosphocholine + a fatty acid + H(+). PLA2 catalyzes the calcium-dependent hydrolysis of the 2-acyl groups in 3-sn-phosphoglycerides. This is Phospholipase A2 D5 from Micrurus pyrrhocryptus (Coral snake).